Consider the following 450-residue polypeptide: Trigger factor (450 aa).

The PPIase FKBP-type domain maps to 161–246; it reads GDRVVIDFKG…VKTVEAPEYP (86 aa). The segment at 422 to 450 is disordered; sequence PMSLQELMSPQQPEAESAEGESKQDETKE. Basic and acidic residues predominate over residues 441-450; that stretch reads GESKQDETKE.

Belongs to the FKBP-type PPIase family. Tig subfamily.

It is found in the cytoplasm. The catalysed reaction is [protein]-peptidylproline (omega=180) = [protein]-peptidylproline (omega=0). Its function is as follows. Involved in protein export. Acts as a chaperone by maintaining the newly synthesized protein in an open conformation. Functions as a peptidyl-prolyl cis-trans isomerase. This chain is Trigger factor, found in Alkalilimnicola ehrlichii (strain ATCC BAA-1101 / DSM 17681 / MLHE-1).